The chain runs to 130 residues: Small ribosomal subunit protein uS8 (130 aa).

The protein belongs to the universal ribosomal protein uS8 family. Part of the 30S ribosomal subunit.

One of the primary rRNA binding proteins, it binds directly to 16S rRNA central domain where it helps coordinate assembly of the platform of the 30S subunit. This is Small ribosomal subunit protein uS8 from Methanobrevibacter smithii (strain ATCC 35061 / DSM 861 / OCM 144 / PS).